Consider the following 255-residue polypeptide: Putative oxidoreductase YtkK (255 aa).

Residue 7 to 14 (TAGSKGLG) coordinates NAD(+).

This sequence belongs to the short-chain dehydrogenases/reductases (SDR) family.

The polypeptide is Putative oxidoreductase YtkK (ytkK) (Bacillus subtilis (strain 168)).